The following is a 200-amino-acid chain: Golgi to ER traffic protein 1 (200 aa).

Over 1–6 (MEPYTL) the chain is Lumenal. The helical transmembrane segment at 7–26 (LLFIFVIQIVKQIISAVGKQ) threads the bilayer. Residues 27–113 (SIESISWVLY…KVNTFTGYLI (87 aa)) lie on the Cytoplasmic side of the membrane. Positions 75-107 (AKWTKLNRQHDKLVAEIEQLQKEVDLDKVKVNT) form a coiled coil. Residues 114 to 134 (AILTSIPIWFFRVWYRSVVLF) form a helical membrane-spanning segment. Over 135-158 (YFPPGILPRALEWSIALPFTVTGG) the chain is Lumenal. The chain crosses the membrane as a helical span at residues 159-175 (VSLTVWMMAAGAVASSL). Over 176–200 (TFLFMFPFEKAVPKPVLAKKSPQQL) the chain is Cytoplasmic.

It belongs to the WRB/GET1 family. As to quaternary structure, component of the Golgi to ER traffic (GET) complex, which is composed of GET1, GET2 and GET3. Within the complex, GET1 and GET2 form a heterotetramer which is stabilized by phosphatidylinositol binding and which binds to the GET3 homodimer.

Its subcellular location is the endoplasmic reticulum membrane. It is found in the golgi apparatus membrane. Its function is as follows. Required for the post-translational delivery of tail-anchored (TA) proteins to the endoplasmic reticulum. Together with GET2, acts as a membrane receptor for soluble GET3, which recognizes and selectively binds the transmembrane domain of TA proteins in the cytosol. The GET complex cooperates with the HDEL receptor ERD2 to mediate the ATP-dependent retrieval of resident ER proteins that contain a C-terminal H-D-E-L retention signal from the Golgi to the ER. This Meyerozyma guilliermondii (strain ATCC 6260 / CBS 566 / DSM 6381 / JCM 1539 / NBRC 10279 / NRRL Y-324) (Yeast) protein is Golgi to ER traffic protein 1.